The following is a 338-amino-acid chain: RNA 3'-terminal phosphate cyclase (338 aa).

Residues Q103 and 283–287 (YLADQ) contribute to the ATP site. H308 acts as the Tele-AMP-histidine intermediate in catalysis.

This sequence belongs to the RNA 3'-terminal cyclase family. Type 1 subfamily.

The protein localises to the cytoplasm. The enzyme catalyses a 3'-end 3'-phospho-ribonucleotide-RNA + ATP = a 3'-end 2',3'-cyclophospho-ribonucleotide-RNA + AMP + diphosphate. Catalyzes the conversion of 3'-phosphate to a 2',3'-cyclic phosphodiester at the end of RNA. The mechanism of action of the enzyme occurs in 3 steps: (A) adenylation of the enzyme by ATP; (B) transfer of adenylate to an RNA-N3'P to produce RNA-N3'PP5'A; (C) and attack of the adjacent 2'-hydroxyl on the 3'-phosphorus in the diester linkage to produce the cyclic end product. The biological role of this enzyme is unknown but it is likely to function in some aspects of cellular RNA processing. The sequence is that of RNA 3'-terminal phosphate cyclase from Escherichia coli O7:K1 (strain IAI39 / ExPEC).